A 975-amino-acid polypeptide reads, in one-letter code: Nesprin-3 (975 aa).

Residues 1–925 (MTQQPQDDFD…LGSLFRRACC (925 aa)) lie on the Cytoplasmic side of the membrane. Residues 220–325 (REHEEYQAGV…WEEEEERLRG (106 aa)) form a Spectrin 1 repeat. Positions 617-645 (NHQHKMDQLSSDFQALQRSLEDLVDRCRQ) form a coiled coil. Residues 647 to 740 (VQEHCTFSHQ…RELAESWRAL (94 aa)) form a Spectrin 2 repeat. A KASH domain is found at 917-975 (GSLFRRACCVALPLQLLLLLFLLLLFLLPIREEDRSCTLANNFARSFTLMLRYNGPPPT). The chain crosses the membrane as a helical; Anchor for type IV membrane protein span at residues 926-946 (VALPLQLLLLLFLLLLFLLPI). The Perinuclear space segment spans residues 947-975 (REEDRSCTLANNFARSFTLMLRYNGPPPT).

It belongs to the nesprin family. As to quaternary structure, core component of LINC complexes which are composed of inner nuclear membrane SUN domain-containing proteins coupled to outer nuclear membrane KASH domain-containing nesprins. SUN and KASH domain-containing proteins seem to bind each other promiscuously; however, differentially expression of LINC complex constituents can give rise to specific assemblies. Interacts with SUN1 and SUN2; probably forming respective LINC complexes. Interacts with PLEC (via actin-binding domain). Interacts with DST. Interacts with SYNE1 via spectrin repeats. Interacts (via KASH domain) with TOR1A (ATP-bound); the interaction is required for SYNE3 nuclear envelope localization. The disulfid bond with SUN1 or SUN2 is required for stability of the respective LINC complex under tensile forces. As to expression, expressed in aortic endothelial cells (at protein level).

The protein resides in the nucleus outer membrane. It localises to the nucleus envelope. Its subcellular location is the rough endoplasmic reticulum. Its function is as follows. As a component of the LINC (LInker of Nucleoskeleton and Cytoskeleton) complex involved in the connection between the nuclear lamina and the cytoskeleton. The nucleocytoplasmic interactions established by the LINC complex play an important role in the transmission of mechanical forces across the nuclear envelope and in nuclear movement and positioning. Probable anchoring protein which tethers the nucleus to the cytoskeleton by binding PLEC which can associate with the intermediate filament system. Plays a role in the regulation of aortic epithelial cell morphology, and is required for flow-induced centrosome polarization and directional migration in aortic endothelial cells. This Homo sapiens (Human) protein is Nesprin-3.